We begin with the raw amino-acid sequence, 868 residues long: Transcription factor pynR (868 aa).

A DNA-binding region (zn(2)-C6 fungal-type) is located at residues 11 to 37; it reads CTFCRTRKIACSGERICNACRSRSIEC. Disordered stretches follow at residues 51–88, 662–683, 715–761, and 829–868; these read NKTT…TSAV, LSGS…LDLS, SGIP…ASDL, and GMGE…GMSN. 2 stretches are compositionally biased toward low complexity: residues 663–683 and 715–727; these read SGSR…LDLS and SGIP…SISH.

Its subcellular location is the nucleus. In terms of biological role, transcription factor that regulates the expression of the gene cluster that mediates the biosynthesis of pyranonigrins, a family of antioxidative compounds. This Aspergillus niger (strain ATCC MYA-4892 / CBS 513.88 / FGSC A1513) protein is Transcription factor pynR.